A 372-amino-acid chain; its full sequence is NAD(P)H-quinone oxidoreductase subunit 1 (372 aa).

8 helical membrane-spanning segments follow: residues 27–47 (IIWL…GVLV), 97–117 (ILFT…WLIV), 128–148 (VGIG…GLLM), 176–196 (LALS…IDIV), 204–224 (ILSW…ICAL), 266–286 (ILSA…PIPV), 308–328 (SIGI…AILL), and 347–367 (FLLP…LALP).

It belongs to the complex I subunit 1 family. As to quaternary structure, NDH-1 is composed of at least 11 different subunits.

The protein localises to the cellular thylakoid membrane. It carries out the reaction a plastoquinone + NADH + (n+1) H(+)(in) = a plastoquinol + NAD(+) + n H(+)(out). The catalysed reaction is a plastoquinone + NADPH + (n+1) H(+)(in) = a plastoquinol + NADP(+) + n H(+)(out). NDH-1 shuttles electrons from an unknown electron donor, via FMN and iron-sulfur (Fe-S) centers, to quinones in the respiratory and/or the photosynthetic chain. The immediate electron acceptor for the enzyme in this species is believed to be plastoquinone. Couples the redox reaction to proton translocation, and thus conserves the redox energy in a proton gradient. The chain is NAD(P)H-quinone oxidoreductase subunit 1 from Prochlorococcus marinus (strain MIT 9515).